The following is a 350-amino-acid chain: Putative zinc metalloprotease jhp_0242 (350 aa).

His16 contacts Zn(2+). Glu17 is a catalytic residue. His20 lines the Zn(2+) pocket. The next 5 helical transmembrane spans lie at 43–63, 94–114, 249–269, 277–297, and 326–346; these read WFFK…GGYV, LWIL…VYFF, LIMG…VGAL, MLLL…LLPI, and LWLV…FNDI. Residues 108 to 177 enclose the PDZ domain; that stretch reads AVLVYFFLAL…GELILEIERN (70 aa).

It belongs to the peptidase M50B family. Zn(2+) serves as cofactor.

It localises to the cell inner membrane. The chain is Putative zinc metalloprotease jhp_0242 from Helicobacter pylori (strain J99 / ATCC 700824) (Campylobacter pylori J99).